We begin with the raw amino-acid sequence, 357 residues long: UDP-N-acetylglucosamine--N-acetylmuramyl-(pentapeptide) pyrophosphoryl-undecaprenol N-acetylglucosamine transferase (357 aa).

UDP-N-acetyl-alpha-D-glucosamine-binding positions include Thr-13–Gly-15, Asn-125, Arg-161, Ser-189, Ile-243, and Gln-288.

It belongs to the glycosyltransferase 28 family. MurG subfamily.

Its subcellular location is the cell inner membrane. The catalysed reaction is di-trans,octa-cis-undecaprenyl diphospho-N-acetyl-alpha-D-muramoyl-L-alanyl-D-glutamyl-meso-2,6-diaminopimeloyl-D-alanyl-D-alanine + UDP-N-acetyl-alpha-D-glucosamine = di-trans,octa-cis-undecaprenyl diphospho-[N-acetyl-alpha-D-glucosaminyl-(1-&gt;4)]-N-acetyl-alpha-D-muramoyl-L-alanyl-D-glutamyl-meso-2,6-diaminopimeloyl-D-alanyl-D-alanine + UDP + H(+). It participates in cell wall biogenesis; peptidoglycan biosynthesis. Cell wall formation. Catalyzes the transfer of a GlcNAc subunit on undecaprenyl-pyrophosphoryl-MurNAc-pentapeptide (lipid intermediate I) to form undecaprenyl-pyrophosphoryl-MurNAc-(pentapeptide)GlcNAc (lipid intermediate II). This chain is UDP-N-acetylglucosamine--N-acetylmuramyl-(pentapeptide) pyrophosphoryl-undecaprenol N-acetylglucosamine transferase, found in Bordetella petrii (strain ATCC BAA-461 / DSM 12804 / CCUG 43448).